Consider the following 836-residue polypeptide: Tuftelin-interacting protein 11 (836 aa).

Over residues 1–13 the composition is skewed to basic and acidic residues; the sequence is MSLSHLYRDGEGH. Disordered stretches follow at residues 1–31, 54–73, and 85–136; these read MSLSHLYRDGEGHMDDDEDERENFEITDWDL, WAERDSDEERPSFGGKRARD, and LKKG…AGGT. The required for interaction with DHX15 stretch occupies residues 1–50; sequence MSLSHLYRDGEGHMDDDEDERENFEITDWDLQNEFNPNRQRHWQTKEEAT. Ser2 carries the phosphoserine modification. Positions 14–28 are enriched in acidic residues; sequence MDDDEDERENFEITD. The span at 54–64 shows a compositional bias: basic and acidic residues; sequence WAERDSDEERP. Ser59 and Ser98 each carry phosphoserine. Over residues 91–102 the composition is skewed to acidic residues; sequence EEAELEDSDDEE. Positions 103-116 are enriched in basic and acidic residues; it reads KPVKQDEFPKDFGP. Ser144 carries the phosphoserine modification. In terms of domain architecture, G-patch spans 149–195; the sequence is TKGIGQKLLQKMGYVPGRGLGKNAQGIINPIEAKQRKGKGAVGAYGS. Residues 183-236 are disordered; the sequence is QRKGKGAVGAYGSERTTQSLQDFPVVDSEEEAEEEFQKELSQWRKDPSGSKKKP. Position 210 is a phosphoserine (Ser210). Residues 217–231 are compositionally biased toward basic and acidic residues; that stretch reads EFQKELSQWRKDPSG. The Nuclear localization signal motif lies at 699–704; the sequence is VKDKFN. The interval 709 to 733 is required for nuclear speckle localization; sequence IMNRAVSSNVGAYMQPGARENIAYL.

This sequence belongs to the TFP11/STIP family. In terms of assembly, identified in the spliceosome C complex. Found in the Intron Large (IL) complex, a post-mRNA release spliceosomal complex containing the excised intron, U2, U5 and U6 snRNPs, and splicing factors. Interacts with TUFT1. Interacts with DHX15; indicative for a recruitment of DHX15 to the IL complex. Interacts with GCFC2.

The protein localises to the cytoplasm. It localises to the nucleus. Functionally, involved in pre-mRNA splicing, specifically in spliceosome disassembly during late-stage splicing events. Intron turnover seems to proceed through reactions in two lariat-intron associated complexes termed Intron Large (IL) and Intron Small (IS). In cooperation with DHX15 seems to mediate the transition of the U2, U5 and U6 snRNP-containing IL complex to the snRNP-free IS complex leading to efficient debranching and turnover of excised introns. May play a role in the differentiation of ameloblasts and odontoblasts or in the forming of the enamel extracellular matrix. This chain is Tuftelin-interacting protein 11 (TFIP11), found in Sus scrofa (Pig).